The chain runs to 532 residues: 2,3-bisphosphoglycerate-independent phosphoglycerate mutase (532 aa).

Mn(2+)-binding residues include D13 and S63. Residue S63 is the Phosphoserine intermediate of the active site. Residues H124, 154-155, R187, R193, 262-265, and K343 contribute to the substrate site; these read RD and RPDR. Residues D421, H425, D463, H464, and H481 each contribute to the Mn(2+) site.

Belongs to the BPG-independent phosphoglycerate mutase family. Monomer. Mn(2+) serves as cofactor.

The enzyme catalyses (2R)-2-phosphoglycerate = (2R)-3-phosphoglycerate. Its pathway is carbohydrate degradation; glycolysis; pyruvate from D-glyceraldehyde 3-phosphate: step 3/5. Catalyzes the interconversion of 2-phosphoglycerate and 3-phosphoglycerate. The chain is 2,3-bisphosphoglycerate-independent phosphoglycerate mutase from Mesoplasma florum (strain ATCC 33453 / NBRC 100688 / NCTC 11704 / L1) (Acholeplasma florum).